The chain runs to 545 residues: CTP synthase (545 aa).

Residues 1–265 are amidoligase domain; that stretch reads MSKYIFVTGG…DDLVVQNLGL (265 aa). S13 is a binding site for CTP. A UTP-binding site is contributed by S13. ATP-binding positions include 14-19 and D71; that span reads SLGKGA. Mg(2+) is bound by residues D71 and E139. CTP is bound by residues 146 to 148, 186 to 191, and K222; these read DIE and KTKPTQ. UTP contacts are provided by residues 186–191 and K222; that span reads KTKPTQ. The Glutamine amidotransferase type-1 domain maps to 290–541; sequence VIALVGKYVG…MRAAIAQRER (252 aa). An L-glutamine-binding site is contributed by G351. The Nucleophile; for glutamine hydrolysis role is filled by C378. L-glutamine is bound by residues 379 to 382, E402, and R469; that span reads LGMQ. Residues H514 and E516 contribute to the active site.

The protein belongs to the CTP synthase family. In terms of assembly, homotetramer.

The catalysed reaction is UTP + L-glutamine + ATP + H2O = CTP + L-glutamate + ADP + phosphate + 2 H(+). It catalyses the reaction L-glutamine + H2O = L-glutamate + NH4(+). It carries out the reaction UTP + NH4(+) + ATP = CTP + ADP + phosphate + 2 H(+). The protein operates within pyrimidine metabolism; CTP biosynthesis via de novo pathway; CTP from UDP: step 2/2. Allosterically activated by GTP, when glutamine is the substrate; GTP has no effect on the reaction when ammonia is the substrate. The allosteric effector GTP functions by stabilizing the protein conformation that binds the tetrahedral intermediate(s) formed during glutamine hydrolysis. Inhibited by the product CTP, via allosteric rather than competitive inhibition. Catalyzes the ATP-dependent amination of UTP to CTP with either L-glutamine or ammonia as the source of nitrogen. Regulates intracellular CTP levels through interactions with the four ribonucleotide triphosphates. The sequence is that of CTP synthase from Acidithiobacillus ferrooxidans (strain ATCC 23270 / DSM 14882 / CIP 104768 / NCIMB 8455) (Ferrobacillus ferrooxidans (strain ATCC 23270)).